A 135-amino-acid chain; its full sequence is Lactoylglutathione lyase (135 aa).

One can recognise a VOC domain in the interval 2–126; sequence RLLHTMLRVG…DGYKIELIEA (125 aa). Ni(2+) is bound at residue His5. Substrate is bound at residue Arg9. Glu56 is a binding site for Ni(2+). The substrate site is built by Asn60 and His74. 2 residues coordinate Ni(2+): His74 and Glu122. The active-site Proton donor/acceptor is Glu122.

Belongs to the glyoxalase I family. In terms of assembly, homodimer. Requires Ni(2+) as cofactor.

The catalysed reaction is (R)-S-lactoylglutathione = methylglyoxal + glutathione. It functions in the pathway secondary metabolite metabolism; methylglyoxal degradation; (R)-lactate from methylglyoxal: step 1/2. Catalyzes the conversion of hemimercaptal, formed from methylglyoxal and glutathione, to S-lactoylglutathione. In Salmonella typhi, this protein is Lactoylglutathione lyase (gloA).